The primary structure comprises 248 residues: DNA repair protein RecO (248 aa).

This sequence belongs to the RecO family.

In terms of biological role, involved in DNA repair and RecF pathway recombination. This is DNA repair protein RecO from Bradyrhizobium sp. (strain BTAi1 / ATCC BAA-1182).